The primary structure comprises 332 residues: Biotin synthase (332 aa).

The Radical SAM core domain maps to 53-282 (HFGKKVKLNM…TKEIRISGGR (230 aa)). Residues C71, C75, and C78 each coordinate [4Fe-4S] cluster. C115, C147, C207, and R277 together coordinate [2Fe-2S] cluster.

Belongs to the radical SAM superfamily. Biotin synthase family. Homodimer. The cofactor is [4Fe-4S] cluster. [2Fe-2S] cluster is required as a cofactor.

It catalyses the reaction (4R,5S)-dethiobiotin + (sulfur carrier)-SH + 2 reduced [2Fe-2S]-[ferredoxin] + 2 S-adenosyl-L-methionine = (sulfur carrier)-H + biotin + 2 5'-deoxyadenosine + 2 L-methionine + 2 oxidized [2Fe-2S]-[ferredoxin]. Its pathway is cofactor biosynthesis; biotin biosynthesis; biotin from 7,8-diaminononanoate: step 2/2. Catalyzes the conversion of dethiobiotin (DTB) to biotin by the insertion of a sulfur atom into dethiobiotin via a radical-based mechanism. In Bacillus cereus (strain G9842), this protein is Biotin synthase.